The chain runs to 256 residues: Fumarate reductase cytochrome b subunit (256 aa).

At 1 to 30 (MTNESILESYSGVTPERKKSRMPAKLDWWQ) the chain is on the cytoplasmic side. A helical membrane pass occupies residues 31–52 (SATGLFLGLFMIGHMFFVSTIL). His-44 is a binding site for heme b. The Periplasmic portion of the chain corresponds to 53-76 (LGDNVMLWVTKKFELDFIFEGGKP). A helical transmembrane segment spans residues 77-98 (IVVSFLAAFVFAVFIAHAFLAM). Residue His-93 participates in heme b binding. Residues 99 to 124 (RKFPINYRQYLTFKTHKDLMRHGDTT) are Cytoplasmic-facing. A helical membrane pass occupies residues 125-149 (LWWIQAMTGFAMFFLGSVHLYIMMT). A heme b-binding site is contributed by His-143. At 150 to 165 (QPQTIGPVSSSFRMVS) the chain is on the periplasmic side. The chain crosses the membrane as a helical span at residues 166–188 (EWMWPLYLVLLFAVELHGSVGLY). His-182 contacts heme b. Residues 189 to 206 (RLAVKWGWFDGETPDKTR) are Cytoplasmic-facing. A helical transmembrane segment spans residues 207–230 (ANLKKLKTLMSAFLIVLGLLTFGA). At 231–256 (YVKKGLEQTDPNIDYKYFDYKRTHHR) the chain is on the periplasmic side.

This sequence belongs to the diheme cytochrome b FrdC family. Part of an enzyme complex containing three subunits: a flavoprotein (frdA), an iron-sulfur protein (frdB), and diheme cytochrome b (frdC). Requires heme b as cofactor.

Its subcellular location is the cell inner membrane. In terms of biological role, the fumarate reductase enzyme complex is required for fumarate respiration using formate or sulfide as electron donor. This subunit anchors the complex in the membrane and binds a diheme cytochrome b. This Wolinella succinogenes (strain ATCC 29543 / DSM 1740 / CCUG 13145 / JCM 31913 / LMG 7466 / NCTC 11488 / FDC 602W) (Vibrio succinogenes) protein is Fumarate reductase cytochrome b subunit (frdC).